Consider the following 874-residue polypeptide: MFIKFLHKIFSNRNDRILKKFKKIVSSINQLEEKFKKLSDKKLQENTGIFRLRLKKGECLDDLLPESFATVREASRRVFNMRHFDVQILGGIVLNKQCIAEMRTGEGKTLTSTLPAYLNALTGRGVHIVTMNDYLAERDAKNNTPLFEFLGLTVGLNLPEMSFIDKKKAYLCDITYGTNNEYGFDYLRDNMIFSAEERVQRELNYALIDEVDSILIDEARTPLIISGPSEDSSFLYKEINKLVPSLICQKKEDSDKFHGNGHFSIDEKSKQIYLTERGLVEVEKILLDRKLMKKEESLYSSNNIILMHHVISALRAHNLFTRNIDYLVKDNNIIIVDEHTGRTMPGRRWSDGLHQAIEAKENVTVRNENQTLASITFQNYFRLYKKIAGMTGTAATESFEFSSIYNLDTVIIPPNKPMIRKDLSDLVYMTEEEKINAILKDIKNCIKKNQPVLVGTISIEKSEMISKKLKILNIKHNVLNAKFHAREAEIIAQAGKPKSVTIATNMAGRGTDIVLGGSLESQLEKNMYLDKIETIKRNWKKQHDLVVLSGGLHIIGTERHESRRIDNQLRGRSGRQGDSGSSRFYLSMEDSLMRIFASDKIISMMRKLGLSLNEAIEHPWVTKAIENAQKKVENRNFDIRKQLLEYDDVCNEQRRVIYAQRNKLIDSENIQQNIYDILKDVLHSIIKTHLNFDFPKNTRNILDLENKLSIEFNLNISIKDWLKKDHDIKKENIIKKIIDIAKKNYLNKEIQIGFHNIRMIEKSIMLKTLDSLWKEHLSAMDYLRQGIHLRGYAQKDPKQEYKRESFNMFSNMLELLKYEVISFLSKLDISYIKSNLHLNMNNNSSIVNNDIKMGRNTPCFCKSGKKYKYCHGSL.

ATP contacts are provided by residues glutamine 87, 105-109 (GEGKT), and aspartate 512. Zn(2+) is bound by residues cysteine 859, cysteine 861, cysteine 870, and histidine 871.

It belongs to the SecA family. As to quaternary structure, monomer and homodimer. Part of the essential Sec protein translocation apparatus which comprises SecA, SecYEG and auxiliary proteins SecDF-YajC and YidC. The cofactor is Zn(2+).

It is found in the cell inner membrane. Its subcellular location is the cytoplasm. It carries out the reaction ATP + H2O + cellular proteinSide 1 = ADP + phosphate + cellular proteinSide 2.. Part of the Sec protein translocase complex. Interacts with the SecYEG preprotein conducting channel. Has a central role in coupling the hydrolysis of ATP to the transfer of proteins into and across the cell membrane, serving both as a receptor for the preprotein-SecB complex and as an ATP-driven molecular motor driving the stepwise translocation of polypeptide chains across the membrane. The chain is Protein translocase subunit SecA from Buchnera aphidicola subsp. Schizaphis graminum (strain Sg).